Consider the following 239-residue polypeptide: 1-(5-phosphoribosyl)-5-[(5-phosphoribosylamino)methylideneamino] imidazole-4-carboxamide isomerase (239 aa).

The active-site Proton acceptor is the aspartate 8. Residue aspartate 130 is the Proton donor of the active site.

It belongs to the HisA/HisF family.

The protein localises to the cytoplasm. It carries out the reaction 1-(5-phospho-beta-D-ribosyl)-5-[(5-phospho-beta-D-ribosylamino)methylideneamino]imidazole-4-carboxamide = 5-[(5-phospho-1-deoxy-D-ribulos-1-ylimino)methylamino]-1-(5-phospho-beta-D-ribosyl)imidazole-4-carboxamide. Its pathway is amino-acid biosynthesis; L-histidine biosynthesis; L-histidine from 5-phospho-alpha-D-ribose 1-diphosphate: step 4/9. This Streptococcus thermophilus (strain ATCC BAA-491 / LMD-9) protein is 1-(5-phosphoribosyl)-5-[(5-phosphoribosylamino)methylideneamino] imidazole-4-carboxamide isomerase.